A 241-amino-acid chain; its full sequence is Large ribosomal subunit protein uL3 (241 aa).

2 disordered regions span residues 140–168 and 216–241; these read SHRS…HMGD and APKP…EEGA. The residue at position 151 (Q151) is an N5-methylglutamine.

It belongs to the universal ribosomal protein uL3 family. As to quaternary structure, part of the 50S ribosomal subunit. Forms a cluster with proteins L14 and L19. In terms of processing, methylated by PrmB.

One of the primary rRNA binding proteins, it binds directly near the 3'-end of the 23S rRNA, where it nucleates assembly of the 50S subunit. The polypeptide is Large ribosomal subunit protein uL3 (Xanthobacter autotrophicus (strain ATCC BAA-1158 / Py2)).